A 164-amino-acid polypeptide reads, in one-letter code: Phosphopantetheine adenylyltransferase (164 aa).

Ser-9 contributes to the substrate binding site. ATP is bound by residues 9–10 (SF) and His-17. Lys-41, Leu-73, and Lys-87 together coordinate substrate. ATP is bound by residues 88 to 90 (GLR), Glu-98, and 122 to 128 (YSYLSSS).

The protein belongs to the bacterial CoaD family. In terms of assembly, homohexamer. Mg(2+) is required as a cofactor.

It is found in the cytoplasm. The enzyme catalyses (R)-4'-phosphopantetheine + ATP + H(+) = 3'-dephospho-CoA + diphosphate. Its pathway is cofactor biosynthesis; coenzyme A biosynthesis; CoA from (R)-pantothenate: step 4/5. In terms of biological role, reversibly transfers an adenylyl group from ATP to 4'-phosphopantetheine, yielding dephospho-CoA (dPCoA) and pyrophosphate. This is Phosphopantetheine adenylyltransferase from Rhodococcus opacus (strain B4).